The following is a 222-amino-acid chain: 3-demethoxyubiquinol 3-hydroxylase (222 aa).

Residues glutamate 71, glutamate 101, histidine 104, glutamate 153, glutamate 185, and histidine 188 each contribute to the Fe cation site.

This sequence belongs to the COQ7 family. It depends on Fe cation as a cofactor.

It localises to the cell membrane. It carries out the reaction a 5-methoxy-2-methyl-3-(all-trans-polyprenyl)benzene-1,4-diol + AH2 + O2 = a 3-demethylubiquinol + A + H2O. Its pathway is cofactor biosynthesis; ubiquinone biosynthesis. In terms of biological role, catalyzes the hydroxylation of 2-nonaprenyl-3-methyl-6-methoxy-1,4-benzoquinol during ubiquinone biosynthesis. The sequence is that of 3-demethoxyubiquinol 3-hydroxylase from Bordetella pertussis (strain Tohama I / ATCC BAA-589 / NCTC 13251).